We begin with the raw amino-acid sequence, 285 residues long: UPF0014 membrane protein STAR2 (285 aa).

Helical transmembrane passes span Phe30–Leu50, Tyr64–Phe84, Ser88–Gly108, His119–Leu139, Tyr148–Met168, Ser203–Gly225, and Ala240–Ser262.

The protein belongs to the UPF0014 family. As to quaternary structure, interacts with STAR2. In terms of tissue distribution, expressed in roots.

The protein resides in the membrane. Associates with STAR2 to form a functional transmembrane ABC transporter required for detoxification of aluminum (Al) in roots. Can specifically transport UDP-glucose. This chain is UPF0014 membrane protein STAR2, found in Oryza sativa subsp. japonica (Rice).